We begin with the raw amino-acid sequence, 89 residues long: Small ribosomal subunit protein bS16 (89 aa).

This sequence belongs to the bacterial ribosomal protein bS16 family.

The polypeptide is Small ribosomal subunit protein bS16 (Gloeobacter violaceus (strain ATCC 29082 / PCC 7421)).